We begin with the raw amino-acid sequence, 252 residues long: Probable transcriptional regulatory protein DSY2470 (252 aa).

This sequence belongs to the TACO1 family.

The protein resides in the cytoplasm. The chain is Probable transcriptional regulatory protein DSY2470 from Desulfitobacterium hafniense (strain Y51).